The primary structure comprises 222 residues: Protein-L-isoaspartate O-methyltransferase (222 aa).

The active site involves S69.

This sequence belongs to the methyltransferase superfamily. L-isoaspartyl/D-aspartyl protein methyltransferase family.

Its subcellular location is the cytoplasm. The catalysed reaction is [protein]-L-isoaspartate + S-adenosyl-L-methionine = [protein]-L-isoaspartate alpha-methyl ester + S-adenosyl-L-homocysteine. In terms of biological role, catalyzes the methyl esterification of L-isoaspartyl residues in peptides and proteins that result from spontaneous decomposition of normal L-aspartyl and L-asparaginyl residues. It plays a role in the repair and/or degradation of damaged proteins. The sequence is that of Protein-L-isoaspartate O-methyltransferase from Nitrosomonas europaea (strain ATCC 19718 / CIP 103999 / KCTC 2705 / NBRC 14298).